The following is a 419-amino-acid chain: Multiple organellar RNA editing factor 1, mitochondrial (419 aa).

A mitochondrion-targeting transit peptide spans 1-60 (MAMISHRLRRALLTATSYVNRSISSSITPASDFPSVSAAVLKRSVIGRSTEVATRAPARL). The interval 174–401 (KEYGGDKYEN…AGQPGSDQVR (228 aa)) is disordered. Positions 237–252 (GPQQGYATPGQGQGTQ) are enriched in low complexity. Positions 310-327 (GQGGSGNYSQGPQGGYNQ) are enriched in gly residues. Residues 342–356 (GPASGAGNLGPAPGA) show a composition bias toward low complexity. The segment covering 357-367 (GNPGYGQGYSG) has biased composition (gly residues). The segment covering 371–401 (EQNQTFPQADQRNRDWNNNNPAGQPGSDQVR) has biased composition (polar residues).

Belongs to the MORF family. Homodimer and heterodimer with MORF3. Heterodimers with MORF8/RIP1, MORF4/RIP4 and MORF6/RIP6. Interacts with PCMP-E90/MEF13. Interacts with PCMP-H13/MEF35.

It localises to the mitochondrion. Functionally, involved in organellar RNA editing. Required for the processing of numerous RNA editing sites in mitochondria. Binds to the mitochondrial MEF19 and MEF21 factors, two pentatricopeptide repeat-containing proteins involved in RNA editing. This chain is Multiple organellar RNA editing factor 1, mitochondrial, found in Arabidopsis thaliana (Mouse-ear cress).